The primary structure comprises 351 residues: Lipopolysaccharide core biosynthesis mannosyltransferase LpsB (351 aa).

It belongs to the glycosyltransferase group 1 family. Glycosyltransferase 4 subfamily.

Its pathway is bacterial outer membrane biogenesis; LPS core biosynthesis. Functionally, acts at transfer of mannose group to a 3-deoxy-D-mono octulonic acid (KDO) via an alpha-1,5 linkage. This is Lipopolysaccharide core biosynthesis mannosyltransferase LpsB (lpsB) from Rhizobium meliloti (strain 1021) (Ensifer meliloti).